A 271-amino-acid chain; its full sequence is TIP41-like protein (271 aa).

The residue at position 106 (K106) is an N6-acetyllysine. The segment at 173–271 (RVMPSSFFLL…PVDSQSTPSE (99 aa)) is interaction with PPP2CA. S265 and S270 each carry phosphoserine.

It belongs to the TIP41 family. In terms of assembly, interacts with PPP2CA. Interacts with PPP2CB, PPP4C and PPP6C. Interacts with IGBP1; the interaction is dependent on PPP2CA. Associates with a protein phosphatase 2A PP2A(C):IGBP1 complex. Interacts with PPP4C and PPP4R2.

It is found in the cytoplasm. In terms of biological role, may be a allosteric regulator of serine/threonine-protein phosphatase 2A (PP2A). Inhibits catalytic activity of the PP2A(D) core complex in vitro. The PP2A(C):TIPRL complex does not show phosphatase activity. Acts as a negative regulator of serine/threonine-protein phosphatase 4 probably by inhibiting the formation of the active PPP4C:PPP4R2 complex; the function is proposed to implicate it in DNA damage response by promoting H2AX phosphorylated on Ser-140 (gamma-H2AX). May play a role in the regulation of ATM/ATR signaling pathway controlling DNA replication and repair. This is TIP41-like protein (Tiprl) from Mus musculus (Mouse).